The following is a 306-amino-acid chain: Aspartate carbamoyltransferase catalytic subunit (306 aa).

R55 and T56 together coordinate carbamoyl phosphate. K84 contacts L-aspartate. Residues R105, H133, and Q136 each contribute to the carbamoyl phosphate site. R166 and R227 together coordinate L-aspartate. Residues L265 and P266 each contribute to the carbamoyl phosphate site.

The protein belongs to the aspartate/ornithine carbamoyltransferase superfamily. ATCase family. Heterododecamer (2C3:3R2) of six catalytic PyrB chains organized as two trimers (C3), and six regulatory PyrI chains organized as three dimers (R2).

The enzyme catalyses carbamoyl phosphate + L-aspartate = N-carbamoyl-L-aspartate + phosphate + H(+). It participates in pyrimidine metabolism; UMP biosynthesis via de novo pathway; (S)-dihydroorotate from bicarbonate: step 2/3. Functionally, catalyzes the condensation of carbamoyl phosphate and aspartate to form carbamoyl aspartate and inorganic phosphate, the committed step in the de novo pyrimidine nucleotide biosynthesis pathway. The protein is Aspartate carbamoyltransferase catalytic subunit of Neisseria gonorrhoeae (strain NCCP11945).